A 327-amino-acid polypeptide reads, in one-letter code: uncharacterized protein (327 aa).

Residues 1 to 19 are Cytoplasmic-facing; that stretch reads MSIAQDRGIVFKLLSIYRA. The helical transmembrane segment at 20–40 threads the bilayer; the sequence is AAGIFMALAQLIVIFFGYCDF. Topologically, residues 41–51 are extracellular; the sequence is KIKGYRIASYN. Residues 52-72 traverse the membrane as a helical segment; it reads APTFASSFIILAVCLLLVVVL. Residues 73-104 are Cytoplasmic-facing; it reads ENPEVKVTNSENSLFSALKQFFRVERKKLISC. A helical membrane pass occupies residues 105–125; sequence LILLWSMFLSSFIMSEVVYFM. Topologically, residues 126–141 are extracellular; it reads PLFLTLHVNWDTKFQG. The chain crosses the membrane as a helical span at residues 142 to 162; that stretch reads IAFMVASILGVTGSYFAPKLI. At 163 to 199 the chain is on the cytoplasmic side; that stretch reads NVGCSCGRAKDGGLEESDTTGSETVEVKKKDSLYSGQ. A helical membrane pass occupies residues 200–220; that stretch reads VFLSIFALFVSLLGQAFMIGA. Residues 221–235 lie on the Extracellular side of the membrane; it reads SEALKHKSMPPTNSG. The helical transmembrane segment at 236-256 threads the bilayer; the sequence is IFFSAGMSITLLGYNFLASSI. At 257-275 the chain is on the cytoplasmic side; it reads PALFSMYIDPKLKVQLMPS. The chain crosses the membrane as a helical span at residues 276–296; the sequence is IGAISGIGKLVAPIVLAALYG. At 297–300 the chain is on the extracellular side; that stretch reads TRLG. The helical transmembrane segment at 301–321 threads the bilayer; that stretch reads LSIAVGFGMILVAVSIPPLIW. At 322-327 the chain is on the cytoplasmic side; it reads LRKKRC.

It is found in the membrane. This is an uncharacterized protein from Saccharomyces cerevisiae (strain ATCC 204508 / S288c) (Baker's yeast).